The chain runs to 658 residues: PTS system 2-O-alpha-mannosyl-D-glycerate-specific EIIABC component (658 aa).

Over 1–313 (MVLFYRAHWR…TELKQALLSG (313 aa)) the chain is Periplasmic. Residues 25 to 171 (TLTHRDALCL…DELLSALDDK (147 aa)) form the PTS EIIA type-2 domain. The active-site Tele-phosphohistidine intermediate; for EIIA activity is H87. H87 carries the post-translational modification Phosphohistidine; by HPr. The PTS EIIB type-2 domain maps to 186 to 282 (IVCVTACPAG…AEALIQQALT (97 aa)). Residue C192 is the Phosphocysteine intermediate; for EIIB activity of the active site. The residue at position 192 (C192) is a Phosphocysteine; by EIIA. The PTS EIIC type-2 domain occupies 306–641 (LKQALLSGIS…AISTAILLMW (336 aa)). The helical transmembrane segment at 314–334 (ISFAVPLIVAGGTVLAVAVLL) threads the bilayer. Residues 335–358 (SQIFGLQDLFNEENSWLWMYRKLG) are Cytoplasmic-facing. Residues 359-379 (GGLLGILMVPVLAAYTAYSLA) form a helical membrane-spanning segment. Topologically, residues 380-389 (DKPALAPGFA) are periplasmic. A helical membrane pass occupies residues 390 to 410 (AGLAANMIGSGFLGAVVGGLI). At 411 to 433 (AGYLMRWVKNHLRLSSKFNGFLT) the chain is on the cytoplasmic side. Residues 434 to 454 (FYLYPVLGTLGAGSLMLFVVG) form a helical membrane-spanning segment. The Periplasmic segment spans residues 455-474 (EPVAWINNSLTAWLNGLSGS). The chain crosses the membrane as a helical span at residues 475–495 (NALLLGAILGFMCSFDLGGPV). The Cytoplasmic segment spans residues 496–500 (NKAAY). A helical transmembrane segment spans residues 501–521 (AFCLGAMANGVYGPYAIFASV). Topologically, residues 522 to 551 (KMVSAFTVTASTMLAPRLFKEFEIETGKST) are periplasmic. A helical transmembrane segment spans residues 552 to 572 (WLLGLAGITEGAIPMAIEDPL). R573 is a topological domain (cytoplasmic). Residues 574-594 (VIGSFVLGSMVTGAIVGAMNI) form a helical membrane-spanning segment. Topologically, residues 595–620 (GLSTPGAGIFSLFLLHDNGAGGVMAA) are periplasmic. A helical transmembrane segment spans residues 621–641 (IGWFGAALVGAAISTAILLMW). Topologically, residues 642–658 (RRHAVKHGNYLTDGVMP) are cytoplasmic.

It localises to the cell inner membrane. It catalyses the reaction (2R)-2-O-(alpha-D-mannosyl)-glycerate(out) + N(pros)-phospho-L-histidyl-[protein] = (2R)-2-O-(6-phospho-alpha-D-mannosyl)-glycerate(in) + L-histidyl-[protein]. In terms of biological role, the phosphoenolpyruvate-dependent sugar phosphotransferase system (sugar PTS), a major carbohydrate active transport system, catalyzes the phosphorylation of incoming sugar substrates concomitantly with their translocation across the cell membrane. This system is involved in mannosyl-D-glycerate transport. Also involved in thermoinduction of ompC. This Escherichia coli (strain K12) protein is PTS system 2-O-alpha-mannosyl-D-glycerate-specific EIIABC component.